Here is a 413-residue protein sequence, read N- to C-terminus: MKWFNTLSHNRWLEQETDRIFDFGKNSVVPTGFGWLGNKGQIKEEMGTHLWITARMLHVYSVAAAMGRPGAYSLVDHGIKAMNGALRDKKYGGWYACVNDEGVVDASKQGYQHFFALLGAASAVTTGHPEARKLLDYTIEIIEKYFWSEEEQMCLESWDEAFSKTEEYRGGNANMHAVEAFLIVYDVTHDKKWLDRAIRVASVIIHDVARNNHYRVNEHFDTQWNPLPDYNKDNPAHRFRAFGGTPGHWIEWGRLMLHIHAALEARCEQPPAWLLEDAKGLFNATVRDAWAPDGADGIVYTVDWEGKPVVRERVRWPIVEAMGTAYALYTVTGDRQYETWYQTWWEYCIKYLMDYENGSWWQELDADNKVTTKVWDGKQDIYHLLHCLVIPRIPLAPGMAPAVAAGLLDINAK.

Residues Arg-55, Tyr-111, Asn-172, His-176, and Arg-238 each contribute to the 6-sulfo-beta-D-quinovose site. His-248 serves as the catalytic Proton donor/acceptor. 4 residues coordinate 6-sulfo-beta-D-quinovose: Glu-251, Gln-362, Gln-379, and His-383. Catalysis depends on His-383, which acts as the Proton donor/acceptor.

Belongs to the N-acylglucosamine 2-epimerase family. Homohexamer.

It carries out the reaction 6-sulfo-beta-D-quinovose = 6-deoxy-6-sulfo-D-fructose. It catalyses the reaction 6-sulfo-beta-D-quinovose = 6-sulfo-D-rhamnose. Its activity is regulated as follows. Significantly inhibited by Cu(2+), Fe(3+) and Co(2+). Partially inhibited by Mg(2+), Ca(2+) and Mn(2+). Also inhibited by ATP, ADP, dATP, TTP and GTP. Catalyzes the isomerization of sulfoquinovose (SQ) to 6-deoxy-6-sulfo-D-fructose (SF). Can also catalyze the interconversion of SQ and sulforhamnose (SR). Has a clear preference for beta-SQ and little-to-no activity on alpha-SQ. In vitro, can also catalyze the interconversion of mannose, fructose and glucose, or lyxose and xylulose, but has extremely low activity with glucose. The protein is Sulfoquinovose isomerase (yihS) of Escherichia coli (strain K12).